Consider the following 438-residue polypeptide: MNTIFSRITPLGNGTLCVIRISGKNVKFLIQKIVKKNIKEKIATFSKLFLDKECVDYAMIIFFKKPNTFTGEDIIEFHIHNNETIVKKIINYLLLNKARFAKAGEFLERRYLNGKISLIECELINNKILYDNENMFQLTKNSEKKIFLCIIKNLKFKINSLIICIEIANFNFSFFFFNDFLFIKYTFKKLLKLLKILIDKITVINYLKKNFTIMILGRRNVGKSTLFNKICAQYDSIVTNIPGTTKNIISKKIKILSKKIKMMDTAGLKIRTKNLIEKIGIIKNINKIYQGNLILYMIDKFNIKNIFFNIPIDFIDKIKLNELIILVNKSDILGKEEGVFKIKNILIILISSKNGTFIKNLKCFINKIVDNKDFSKNNYSDVKILFNKFSFFYKEFSCNYDLVLSKLIDFQKNIFKLTGNFTNKKIINSCFRNFCIGK.

Positions 20, 76, and 115 each coordinate (6S)-5-formyl-5,6,7,8-tetrahydrofolate. The TrmE-type G domain maps to Asn210–Asp370. Asn220 is a binding site for K(+). GTP contacts are provided by residues Asn220–Thr225, Thr239–Thr245, and Asp264–Gly267. Residue Ser224 participates in Mg(2+) binding. Thr239, Ile241, and Thr244 together coordinate K(+). Mg(2+) is bound at residue Thr245. Lys438 contributes to the (6S)-5-formyl-5,6,7,8-tetrahydrofolate binding site.

Belongs to the TRAFAC class TrmE-Era-EngA-EngB-Septin-like GTPase superfamily. TrmE GTPase family. As to quaternary structure, homodimer. Heterotetramer of two MnmE and two MnmG subunits. K(+) serves as cofactor.

It is found in the cytoplasm. Functionally, exhibits a very high intrinsic GTPase hydrolysis rate. Involved in the addition of a carboxymethylaminomethyl (cmnm) group at the wobble position (U34) of certain tRNAs, forming tRNA-cmnm(5)s(2)U34. This chain is tRNA modification GTPase MnmE, found in Carsonella ruddii (strain PV).